The primary structure comprises 334 residues: Glyceraldehyde-3-phosphate dehydrogenase 1 (334 aa).

Residues 12-13 (RI), Asp35, and Arg79 contribute to the NAD(+) site. Residues 152–154 (SCT), Thr183, Arg198, 211–212 (SG), and Arg234 contribute to the D-glyceraldehyde 3-phosphate site. Cys153 serves as the catalytic Nucleophile. Asn315 provides a ligand contact to NAD(+).

It belongs to the glyceraldehyde-3-phosphate dehydrogenase family. In terms of assembly, homotetramer.

The protein localises to the cytoplasm. It catalyses the reaction D-glyceraldehyde 3-phosphate + phosphate + NAD(+) = (2R)-3-phospho-glyceroyl phosphate + NADH + H(+). The protein operates within carbohydrate degradation; glycolysis; pyruvate from D-glyceraldehyde 3-phosphate: step 1/5. Its activity is regulated as follows. Resistant to pentalenolactone. Functionally, catalyzes the oxidative phosphorylation of glyceraldehyde 3-phosphate (G3P) to 1,3-bisphosphoglycerate (BPG) using the cofactor NAD. The first reaction step involves the formation of a hemiacetal intermediate between G3P and a cysteine residue, and this hemiacetal intermediate is then oxidized to a thioester, with concomitant reduction of NAD to NADH. The reduced NADH is then exchanged with the second NAD, and the thioester is attacked by a nucleophilic inorganic phosphate to produce BPG. This chain is Glyceraldehyde-3-phosphate dehydrogenase 1 (gap1), found in Streptomyces avermitilis (strain ATCC 31267 / DSM 46492 / JCM 5070 / NBRC 14893 / NCIMB 12804 / NRRL 8165 / MA-4680).